The chain runs to 218 residues: Putative tRNA methyltransferase MG248 (218 aa).

This sequence belongs to the TrmK family.

It is found in the cytoplasm. The protein is Putative tRNA methyltransferase MG248 of Mycoplasma genitalium (strain ATCC 33530 / DSM 19775 / NCTC 10195 / G37) (Mycoplasmoides genitalium).